Reading from the N-terminus, the 326-residue chain is UDP-N-acetylglucosamine transporter (326 aa).

The next 8 membrane-spanning stretches (helical) occupy residues 4-24 (NLKY…VLTM), 38-58 (LSST…IFLV), 136-156 (LGMY…FVQW), 174-194 (FVGL…GVYF), 212-232 (LGFF…GELV), 243-263 (QLTW…AAVI), 269-289 (ILKG…SYFW), and 293-313 (FVPT…TFLY).

Belongs to the nucleotide-sugar transporter family. SLC35A subfamily. As to quaternary structure, interacts with SLC35A2; the interaction is reduced in the presence of SLC35A4. Found in a complex with SLC35A2 and SLC35A4. Interacts with MGAT4B. In terms of processing, O-Glcnacylation regulates the stability of SLC35A3 and the specific complex formation with MGAT4B.

It localises to the golgi apparatus membrane. The enzyme catalyses UMP(out) + UDP-N-acetyl-alpha-D-glucosamine(in) = UMP(in) + UDP-N-acetyl-alpha-D-glucosamine(out). Transports diphosphate-N-acetylglucosamine (UDP-GlcNAc) from the cytosol into the lumen of the Golgi apparatus, functioning as an antiporter that exchanges UDP-N-acetyl-alpha-D-glucosamine for UMP. May supply UDP-GlcNAc as substrate for Golgi-resident glycosyltransferases that generate highly branched, multiantennary complex N-glycans and keratan sulfate. However, the exact role of SLC35A3 still needs to be elucidated, it could be a member of a catalytically more efficient multiprotein complex rather than function independently as a single transporter. In Rattus norvegicus (Rat), this protein is UDP-N-acetylglucosamine transporter (Slc35a3).